The chain runs to 187 residues: MSTAEKVQPRLKQRYRSEIREALNKQFSYGNVMQIPTVVKVVVNMGVGDAARDAKLINGAVSDLALITGQKPEVRKARKSIAQFKLREGMPIGVRVTLRDDRMWEFLDRLTSIALPRIRDFRGLSPKQFDGVGNYTFGLAEQSVFHEIDVDKIDRVRGMDINVVTSATTDDEGRALLRALGFPFKEN.

This sequence belongs to the universal ribosomal protein uL5 family. In terms of assembly, part of the 50S ribosomal subunit; part of the 5S rRNA/L5/L18/L25 subcomplex. Contacts the 5S rRNA and the P site tRNA. Forms a bridge to the 30S subunit in the 70S ribosome.

Functionally, this is one of the proteins that bind and probably mediate the attachment of the 5S RNA into the large ribosomal subunit, where it forms part of the central protuberance. In the 70S ribosome it contacts protein S13 of the 30S subunit (bridge B1b), connecting the 2 subunits; this bridge is implicated in subunit movement. Contacts the P site tRNA; the 5S rRNA and some of its associated proteins might help stabilize positioning of ribosome-bound tRNAs. This chain is Large ribosomal subunit protein uL5, found in Mycobacterium leprae (strain Br4923).